Consider the following 483-residue polypeptide: AP-3 complex subunit mu (483 aa).

The 272-residue stretch at 211–482 (NNELYVDLLE…KTQTGNFQVR (272 aa)) folds into the MHD domain.

The protein belongs to the adaptor complexes medium subunit family. In terms of assembly, adaptor protein complex 3 (AP-3) is a heterotetramer composed of 2 large adaptins (APL5 and APL6), a medium adaptin (APM3) and a small adaptin (APS3).

The protein resides in the golgi apparatus. Its subcellular location is the cytoplasmic vesicle membrane. Its function is as follows. Part of the AP-3 complex, an adaptor-related complex which is not clathrin-associated. The complex is associated with the Golgi region as well as more peripheral structures. It facilitates the budding of vesicles from the Golgi membrane and may be directly involved in trafficking to the vacuole. Required for the transport via the ALP pathway, which directs the transport of the cargo proteins PHO8 and VAM3 to the vacuole. The polypeptide is AP-3 complex subunit mu (APM3) (Saccharomyces cerevisiae (strain ATCC 204508 / S288c) (Baker's yeast)).